The chain runs to 438 residues: RNA polymerase sigma factor SigA (438 aa).

Residues 1–11 (MKKSKSKKKAA) show a composition bias toward basic residues. The segment at 1-69 (MKKSKSKKKA…PLDLEGPLEA (69 aa)) is disordered. The segment covering 12 to 26 (KAQEVEVKEPVKEPE) has biased composition (basic and acidic residues). Acidic residues-rich tracts occupy residues 27 to 45 (PLPE…EPDP) and 52 to 69 (PELE…PLEA). Positions 93–128 (SDPVRQYLHEIGQVPLLTLEEEIDLARKVEEGMEAI) are sigma-70 factor domain-1. The sigma-70 factor domain-2 stretch occupies residues 202-272 (LIEANLRLVV…NRAIADQART (71 aa)). The Interaction with polymerase core subunit RpoC signature appears at 226–229 (DLIQ). The tract at residues 281–359 (ETINKLSRTA…DENLPSPVEA (79 aa)) is sigma-70 factor domain-3. Residues 372–424 (ALSKLSEREAMVLKLRKGLIDGREHTLEEVGAYFGVTRERIRQIENKALRKLK) form a sigma-70 factor domain-4 region. Residues 398–417 (LEEVGAYFGVTRERIRQIEN) constitute a DNA-binding region (H-T-H motif).

Belongs to the sigma-70 factor family. RpoD/SigA subfamily. Interacts transiently with the RNA polymerase catalytic core formed by RpoA, RpoB, RpoC and RpoZ (2 alpha, 1 beta, 1 beta' and 1 omega subunit) to form the RNA polymerase holoenzyme that can initiate transcription.

It localises to the cytoplasm. Sigma factors are initiation factors that promote the attachment of RNA polymerase to specific initiation sites and are then released. This sigma factor is the primary sigma factor during exponential growth. This is RNA polymerase sigma factor SigA from Thermus aquaticus.